The following is a 448-amino-acid chain: MSSVSTASLNCLPDELLVHVLSSLETKQAASTSVLSKRWRTLFAVRRNLDFDDSIISHPEVGEQNMDDVQESFRDFVDKRLAFQGSVPINKFSLIYGDKHDDVRVDRWINTALEHGVSELHLCLTSVTRRLHRFPSNVFRSTTLVKLTLGTNLFIVYFPSDTCLPVLKILVLDSIWFDRIKFSNVLLAGCPALEDLTIDQKSFPGLPNVVSSKTVKSLSIVYKYSADFDWFRTVALDTPNLVTLLYSTYARHRYRHCNLESLVNATLDLHFLENCDEAFEPNVTDLMIAVRNVQMLHLTSSATEVISQCCKGGLPMFKNLLVLVFLGNTERVWKVFLPLLLEHSPNLTKLCLESLFLILQGLYHGTDEDEFDEIHIPRSNKVNMLRIIQCQGTENELKHISHFLLKMECLQLVQVNFSETIVDSKKVQLTEDLMKLPSASSRLTMQVI.

An F-box domain is found at 6–54 (TASLNCLPDELLVHVLSSLETKQAASTSVLSKRWRTLFAVRRNLDFDDS). 6 LRR repeats span residues 117–141 (VSEL…VFRS), 143–165 (TLVK…TCLP), 190–213 (CPAL…VSSK), 228–251 (FDWF…TYAR), 290–313 (VRNV…CKGG), and 421–443 (IVDS…SSRL).

The protein is Putative F-box/LRR-repeat protein At3g44810 of Arabidopsis thaliana (Mouse-ear cress).